Reading from the N-terminus, the 223-residue chain is Endonuclease V (223 aa).

Residues D35 and D103 each coordinate Mg(2+).

It belongs to the endonuclease V family. Mg(2+) serves as cofactor.

It localises to the cytoplasm. The enzyme catalyses Endonucleolytic cleavage at apurinic or apyrimidinic sites to products with a 5'-phosphate.. DNA repair enzyme involved in the repair of deaminated bases. Selectively cleaves double-stranded DNA at the second phosphodiester bond 3' to a deoxyinosine leaving behind the intact lesion on the nicked DNA. This chain is Endonuclease V, found in Cronobacter sakazakii (strain ATCC BAA-894) (Enterobacter sakazakii).